The following is a 69-amino-acid chain: Trypsin/subtilisin inhibitor (69 aa).

Residues C4 and C49 are joined by a disulfide bond.

This sequence belongs to the protease inhibitor I13 (potato type I serine protease inhibitor) family.

Its function is as follows. Inhibitor of trypsin, chymotrypsin, subtilisin, etc. In Amaranthus caudatus (Love-lies-bleeding), this protein is Trypsin/subtilisin inhibitor.